Reading from the N-terminus, the 334-residue chain is Protein-methionine-sulfoxide reductase catalytic subunit MsrP (334 aa).

The tat-type signal signal peptide spans 1–44 (MKKNQFLKESDVTAESVFFMKRRQVLKALGISAAALSLPHAAHA). Mo-molybdopterin contacts are provided by residues N88, 91–92 (YE), C146, T181, N233, R238, and 249–251 (GIK).

Belongs to the MsrP family. As to quaternary structure, heterodimer of a catalytic subunit (MsrP) and a heme-binding subunit (MsrQ). Requires Mo-molybdopterin as cofactor. Predicted to be exported by the Tat system. The position of the signal peptide cleavage has not been experimentally proven.

It localises to the periplasm. The enzyme catalyses L-methionyl-[protein] + a quinone + H2O = L-methionyl-(S)-S-oxide-[protein] + a quinol. It carries out the reaction L-methionyl-[protein] + a quinone + H2O = L-methionyl-(R)-S-oxide-[protein] + a quinol. Functionally, part of the MsrPQ system that repairs oxidized periplasmic proteins containing methionine sulfoxide residues (Met-O), using respiratory chain electrons. Thus protects these proteins from oxidative-stress damage caused by reactive species of oxygen and chlorine generated by the host defense mechanisms. MsrPQ is essential for the maintenance of envelope integrity under bleach stress, rescuing a wide series of structurally unrelated periplasmic proteins from methionine oxidation, including the primary periplasmic chaperone SurA and the lipoprotein Pal. The catalytic subunit MsrP is non-stereospecific, being able to reduce both (R-) and (S-) diastereoisomers of methionine sulfoxide. The protein is Protein-methionine-sulfoxide reductase catalytic subunit MsrP of Escherichia coli O17:K52:H18 (strain UMN026 / ExPEC).